Reading from the N-terminus, the 211-residue chain is Ribosomal RNA small subunit methyltransferase G (211 aa).

Residues Gly74, Leu79, 125–126, and Arg140 contribute to the S-adenosyl-L-methionine site; that span reads AE.

This sequence belongs to the methyltransferase superfamily. RNA methyltransferase RsmG family.

Its subcellular location is the cytoplasm. Specifically methylates the N7 position of guanine in position 518 of 16S rRNA. The protein is Ribosomal RNA small subunit methyltransferase G of Clavibacter sepedonicus (Clavibacter michiganensis subsp. sepedonicus).